We begin with the raw amino-acid sequence, 301 residues long: Acetylglutamate kinase (301 aa).

Substrate-binding positions include 68–69 (GG), Arg-90, and Asn-195.

Belongs to the acetylglutamate kinase family. ArgB subfamily.

It localises to the cytoplasm. It catalyses the reaction N-acetyl-L-glutamate + ATP = N-acetyl-L-glutamyl 5-phosphate + ADP. The protein operates within amino-acid biosynthesis; L-arginine biosynthesis; N(2)-acetyl-L-ornithine from L-glutamate: step 2/4. Catalyzes the ATP-dependent phosphorylation of N-acetyl-L-glutamate. The polypeptide is Acetylglutamate kinase (Pseudomonas putida (strain ATCC 700007 / DSM 6899 / JCM 31910 / BCRC 17059 / LMG 24140 / F1)).